An 89-amino-acid chain; its full sequence is Small ribosomal subunit protein bS20 (89 aa).

The interval 1-29 (MTLANIKSAKKRAVQSEKRRQHNASQRSM) is disordered.

Belongs to the bacterial ribosomal protein bS20 family.

In terms of biological role, binds directly to 16S ribosomal RNA. This is Small ribosomal subunit protein bS20 from Haemophilus influenzae (strain 86-028NP).